The following is a 66-amino-acid chain: Ranalexin (66 aa).

Residues 1–20 (MFTLKKSLLLLFFLGTINLS) form the signal peptide. Positions 21–44 (LCEEERNAEEERRDNPDERDVEVE) are cleaved as a propeptide — small acidic peptide. The cysteines at positions 60 and 66 are disulfide-linked.

It belongs to the frog skin active peptide (FSAP) family. Brevinin subfamily. In terms of tissue distribution, expressed by the skin dorsal glands.

The protein resides in the secreted. Potent microbicidal activity, active against S.aureus and E.coli. It also acts as a membrane-disruptive agent at higher concentrations. The protein is Ranalexin of Aquarana catesbeiana (American bullfrog).